We begin with the raw amino-acid sequence, 306 residues long: MTASLHIILDTDPGIDDAAAIAAALFAPQLDLQLITTVAGNVSVEKTTRNALQLLHFWNSDIPLAQGAATPLLRPLRDAAYVHGESGMEGYDFVDHQRQPLAKPAFIAIRDVLMNAPEPMTLVAIGPLTNIALLLMHYPECACNIRRLVLMGGSAGRGNFTPNAEFNIAVDPEAAALVFRSGLEIVMCGLDVTNQAMLSPDFLNKLPALNRTGKMLHSLFNHYRSGSMRTGVRMHDLCAIAWLVRPELFTLQSCFVAVETQGEYTAGTTVVDIEGRLGQPANAQVALALDVDGFRQWVAEVFAYVP.

His-235 is an active-site residue.

The protein belongs to the IUNH family. RihC subfamily.

Its function is as follows. Hydrolyzes both purine and pyrimidine ribonucleosides with a broad-substrate specificity. This Salmonella typhi protein is Non-specific ribonucleoside hydrolase RihC.